The following is a 173-amino-acid chain: MRGEVRLQSFTEVPQAISAYGPLSDASGKKSFSIASLRLVKNAVFVARIEGVTTREAAEALTNLSLYVSREALPPPEEEEFYLADLIGLDAFVADADGKEVLFGRIADVLNFGGGDILEIAPSDGGETRLLPFTRQVVPRIDLTARRVLVVPPEEVEAQEPPEKDAGGDEPSP.

The PRC barrel domain occupies 78–157 (EEEFYLADLI…VLVVPPEEVE (80 aa)). A disordered region spans residues 152 to 173 (PPEEVEAQEPPEKDAGGDEPSP).

This sequence belongs to the RimM family. Binds ribosomal protein uS19.

The protein resides in the cytoplasm. Its function is as follows. An accessory protein needed during the final step in the assembly of 30S ribosomal subunit, possibly for assembly of the head region. Essential for efficient processing of 16S rRNA. May be needed both before and after RbfA during the maturation of 16S rRNA. It has affinity for free ribosomal 30S subunits but not for 70S ribosomes. The polypeptide is Ribosome maturation factor RimM (Beijerinckia indica subsp. indica (strain ATCC 9039 / DSM 1715 / NCIMB 8712)).